The chain runs to 593 residues: Tyrosine-protein phosphatase non-receptor type 11 (593 aa).

Thr-2 is modified (N-acetylthreonine). 2 consecutive SH2 domains span residues 6–102 and 112–216; these read WFHP…KYPL and WFHG…KQPL. A phosphotyrosine mark is found at Tyr-62 and Tyr-66. The Tyrosine-protein phosphatase domain occupies 247–521; it reads FWEEFETLQQ…RFIYMAVQHY (275 aa). Residues Asp-425, 459-465, and Gln-506 contribute to the substrate site; that span reads CSAGIGR. Cys-459 serves as the catalytic Phosphocysteine intermediate. Tyr-542 and Tyr-580 each carry phosphotyrosine; by PDGFR.

Belongs to the protein-tyrosine phosphatase family. Non-receptor class 2 subfamily. In terms of assembly, interacts with CD84 and with phosphorylated SIT1 and MZPL1. Interacts with FCRL4, FCRL6 and ANKHD1. Interacts with GAREM1 (tyrosine phosphorylated); the interaction increases MAPK/ERK activity and does not affect the GRB2/SOS complex formation. Interacts with PTPNS1 and BCAR3. Interacts with phosphorylated LIME1. Interacts with SHB and INPP5D/SHIP1. Interacts with KIR2DL1; the interaction is enhanced by ARRB2. Interacts with GAB2. Interacts with TERT; the interaction retains TERT in the nucleus. Interacts with PECAM1 and FER. Interacts with EPHA2 (activated); participates in PTK2/FAK1 dephosphorylation in EPHA2 downstream signaling. Interacts with MILR1 (tyrosine phosphorylated). Interacts with FLT1 (tyrosine-phosphorylated), FLT3 (tyrosine-phosphorylated), FLT4 (tyrosine-phosphorylated), KIT and GRB2. Interacts with ROS1; mediates PTPN11 phosphorylation. Interacts with PDGFRA (tyrosine phosphorylated). Interacts with PDGFRB (tyrosine phosphorylated); this interaction increases the PTPN11 phosphatase activity. Interacts (via SH2 domain) with TEK/TIE2 (tyrosine phosphorylated). Interacts with CEACAM1 (via cytoplasmic domain); this interaction depends on the monomer/dimer equilibrium and is phosphorylation-dependent. Interacts with MPIG6B (via ITIM motif). Interacts with SIGLEC10. Interacts with Lilrb4a (when tyrosine phosphorylated). Interacts with SIGLEC10. Interacts with CLEC12B (via ITIM motif); this interaction triggers dephosphorylation and activation of PTPN11. Interacts (via SH2 domains) with NEDD9/CAS-L; the interaction is enhanced when NEDD9/CAS-L is tyrosine phosphorylated. Interacts with PIRB; when PIRB is phosphorylated by LYN at 'Tyr-794' and 'Tyr-824'. In terms of processing, phosphorylated on Tyr-542 and Tyr-580 upon receptor protein tyrosine kinase activation; which creates a binding site for GRB2 and other SH2-containing proteins. Phosphorylated upon activation of the receptor-type kinase FLT3. Phosphorylated by activated PDGFRB. Phosphorylated upon activation of the receptor-type kinase PDGFRA. In terms of tissue distribution, highly expressed in brain, heart and kidney.

It is found in the cytoplasm. It catalyses the reaction O-phospho-L-tyrosyl-[protein] + H2O = L-tyrosyl-[protein] + phosphate. Acts downstream of various receptor and cytoplasmic protein tyrosine kinases to participate in the signal transduction from the cell surface to the nucleus. Positively regulates MAPK signal transduction pathway. Dephosphorylates GAB1, ARHGAP35 and EGFR. Dephosphorylates ROCK2 at 'Tyr-722' resulting in stimulation of its RhoA binding activity. Dephosphorylates CDC73. Dephosphorylates SOX9 on tyrosine residues, leading to inactivate SOX9 and promote ossification. Dephosphorylates tyrosine-phosphorylated NEDD9/CAS-L. The chain is Tyrosine-protein phosphatase non-receptor type 11 (Ptpn11) from Mus musculus (Mouse).